A 28-amino-acid chain; its full sequence is MRNLQPNMSRWAFFAKSVGTWNKSSCRS.

The chain is Putative fruR/shl operon leader peptide (fruL) from Escherichia coli O6:H1 (strain CFT073 / ATCC 700928 / UPEC).